We begin with the raw amino-acid sequence, 316 residues long: Transaldolase (316 aa).

Lysine 127 (schiff-base intermediate with substrate) is an active-site residue.

The protein belongs to the transaldolase family. Type 2 subfamily.

The protein localises to the cytoplasm. The enzyme catalyses D-sedoheptulose 7-phosphate + D-glyceraldehyde 3-phosphate = D-erythrose 4-phosphate + beta-D-fructose 6-phosphate. It participates in carbohydrate degradation; pentose phosphate pathway; D-glyceraldehyde 3-phosphate and beta-D-fructose 6-phosphate from D-ribose 5-phosphate and D-xylulose 5-phosphate (non-oxidative stage): step 2/3. Its function is as follows. Transaldolase is important for the balance of metabolites in the pentose-phosphate pathway. This chain is Transaldolase, found in Helicobacter pylori (strain P12).